The following is a 514-amino-acid chain: Putative ankyrin repeat protein R863 (514 aa).

ANK repeat units lie at residues 45-74 (AKIDVIEYIVRNNLTDILKYIVVLKTLKHP), 84-114 (KSLNKLLIDNCEKRRLDIIQYLINIGADINS), 115-144 (KKNRAVRLASERGYLEIVKYLVSQGADVRA), 146-174 (KDYAVVWASRNGHLEVVKYLVSLGANIKV), 176-204 (DNFAVRWASRNGYIDVVKYLTSQDANIRA), 205-234 (DNNYAVRLASENGHIDVVKYLVSLGADIRA), 236-264 (NNYAIRHASRGGHIEVVEYLVSLGANVKS), 266-294 (NDCAVKFASKNGHLGVVKYLASQGADVRS), 295-324 (ENDYAFRMASENGHLEVVVYLVRQGVNVRA), 325-354 (DNNYAVRMASENGYLEIVKFLVSQGANIRS), 356-384 (NDYAIQKASKNGHLEVVEHLVNQGANFKS), 385-414 (DYDCAIKLASENGHLEVVKYLVSQDADIRV), 415-444 (NNDYAIRWASRNGHIEVVKYLVSQGADIRA), 446-474 (NDYAVRMASENGHLEVVKYLVNLGANVKA), and 476-504 (NNYAVGWASRNGHIGVVKYLVSQGADVRS).

The sequence is that of Putative ankyrin repeat protein R863 from Acanthamoeba polyphaga mimivirus (APMV).